A 562-amino-acid polypeptide reads, in one-letter code: NAD-dependent malic enzyme (562 aa).

Tyr-101 functions as the Proton donor in the catalytic mechanism. Position 154 (Arg-154) interacts with NAD(+). Lys-172 acts as the Proton acceptor in catalysis. A divalent metal cation is bound by residues Glu-243, Asp-244, and Asp-267. NAD(+) contacts are provided by Asp-267 and Asn-415.

It belongs to the malic enzymes family. As to quaternary structure, homotetramer. Mg(2+) serves as cofactor. Requires Mn(2+) as cofactor.

It carries out the reaction (S)-malate + NAD(+) = pyruvate + CO2 + NADH. The catalysed reaction is oxaloacetate + H(+) = pyruvate + CO2. The protein is NAD-dependent malic enzyme of Aliivibrio fischeri (strain ATCC 700601 / ES114) (Vibrio fischeri).